The chain runs to 271 residues: MEDYLKQFVEETSFYNRLVLGTFMPESWWGPLPHMLQGWLRNYIGGVLLYFISGFLWCFYIYHLKRNVYIPKDAIPSNKAMLLQISVAMKAMPWYCALPSLSEYMIENGWTKCFARISDVGWLSYVIYAAIYLVIVEFGIYWMHMELHDIKPLYKYLHATHHIYNKQNTLSPFAGLAFHPLDGILQAVPHVVALLLVPMHFSTHIALIFLEALWTANIHDCIHGKVFPVMGAGYHTIHHRTYRHNYGHYTIWMDWMFGTLRDPVEEDAKKM.

Helical transmembrane passes span 44–64 and 120–140; these read IGGV…IYHL and VGWL…EFGI. The region spanning 130–259 is the Fatty acid hydroxylase domain; that stretch reads AIYLVIVEFG…TIWMDWMFGT (130 aa). The Histidine box-1 signature appears at 144 to 148; sequence HMELH. The Histidine box-2 motif lies at 158–162; that stretch reads HATHH. Residues 190-210 traverse the membrane as a helical segment; sequence HVVALLLVPMHFSTHIALIFL. Positions 235–239 match the Histidine box-3 motif; it reads HTIHH.

Belongs to the sterol desaturase family. It depends on Fe cation as a cofactor.

The protein localises to the endoplasmic reticulum membrane. It carries out the reaction a Delta(7)-sterol + 2 Fe(II)-[cytochrome b5] + O2 + 2 H(+) = a Delta(5),Delta(7)-sterol + 2 Fe(III)-[cytochrome b5] + 2 H2O. Its function is as follows. Involved in the biosynthesis of sitosterol and campesterol. The polypeptide is Delta(7)-sterol-C5(6)-desaturase (Nicotiana tabacum (Common tobacco)).